The chain runs to 663 residues: Putative glucosamine-6-phosphate deaminase-like protein BT_0258 (663 aa).

Positions 1-290 are glucosamine-6-phosphate deaminase-like; that stretch reads MKTNLSSQIT…NLTRIQRPWL (290 aa). Glutamate 184 is a catalytic residue.

This sequence in the N-terminal section; belongs to the glucosamine/galactosamine-6-phosphate isomerase family. NagB subfamily.

The polypeptide is Putative glucosamine-6-phosphate deaminase-like protein BT_0258 (Bacteroides thetaiotaomicron (strain ATCC 29148 / DSM 2079 / JCM 5827 / CCUG 10774 / NCTC 10582 / VPI-5482 / E50)).